The following is a 1278-amino-acid chain: Papilin (1278 aa).

Residues 1 to 18 (MRLLLLVPLLLAPAPGSS) form the signal peptide. TSP type-1 domains lie at 26–80 (SDTW…ESCP), 304–361 (PGFS…HPCP), 362–421 (ETKR…ACNL), 423–481 (RCAA…EDCP), and 484–539 (SDQA…QPCH). Cystine bridges form between C38-C74, C42-C79, C53-C64, C316-C355, C320-C360, and C331-C343. The tract at residues 544–632 (VPSMQDVHTP…SGSGPHDCRH (89 aa)) is disordered. The segment covering 582 to 599 (PSARGDHRGERGDPRGDQ) has biased composition (basic and acidic residues). Low complexity predominate over residues 608 to 620 (PAPSLQQPPYQQP). Intrachain disulfides connect C754-C804, C763-C787, and C779-C800. Residues 754-804 (CLLPSAHGSCADWAARWYFVASVGQCNRFWYGGCHGNANNFASEQECMSSC) form the BPTI/Kunitz inhibitor domain. Residues 805 to 901 (QGSLHGPRRP…GGDAGSPAPP (97 aa)) form a disordered region. Ig-like C2-type domains follow at residues 900 to 995 (PPFH…LRII), 1033 to 1128 (PSSH…VQLR), and 1133 to 1218 (LTIS…TEVK). C931 and C978 are joined by a disulfide. The interval 1014–1042 (RDPAQDFGQAGAAGPLGAIPSSHPQPANR) is disordered. Intrachain disulfides connect C1065/C1112 and C1154/C1202. A PLAC domain is found at 1231–1270 (PGRDCVDQPELANCDLILQAQLCGNEYYSSFCCASCSRFQ).

This sequence belongs to the papilin family.

The protein resides in the secreted. The polypeptide is Papilin (PAPLN) (Homo sapiens (Human)).